The primary structure comprises 183 residues: Ribosome rescue factor SmrB (183 aa).

The 76-residue stretch at L98–E173 folds into the Smr domain.

The protein belongs to the SmrB family. In terms of assembly, associates with collided ribosomes, but not with correctly translating polysomes.

Its function is as follows. Acts as a ribosome collision sensor. Detects stalled/collided disomes (pairs of ribosomes where the leading ribosome is stalled and a second ribosome has collided with it) and endonucleolytically cleaves mRNA at the 5' boundary of the stalled ribosome. Stalled/collided disomes form a new interface (primarily via the 30S subunits) that binds SmrB. Cleaved mRNA becomes available for tmRNA ligation, leading to ribosomal subunit dissociation and rescue of stalled ribosomes. The sequence is that of Ribosome rescue factor SmrB from Erwinia tasmaniensis (strain DSM 17950 / CFBP 7177 / CIP 109463 / NCPPB 4357 / Et1/99).